A 192-amino-acid chain; its full sequence is Fe/S biogenesis protein NfuA (192 aa).

[4Fe-4S] cluster contacts are provided by Cys149 and Cys152.

This sequence belongs to the NfuA family. Homodimer. It depends on [4Fe-4S] cluster as a cofactor.

Involved in iron-sulfur cluster biogenesis. Binds a 4Fe-4S cluster, can transfer this cluster to apoproteins, and thereby intervenes in the maturation of Fe/S proteins. Could also act as a scaffold/chaperone for damaged Fe/S proteins. This chain is Fe/S biogenesis protein NfuA, found in Shewanella piezotolerans (strain WP3 / JCM 13877).